The sequence spans 118 residues: Large ribosomal subunit protein uL18 (118 aa).

It belongs to the universal ribosomal protein uL18 family. As to quaternary structure, part of the 50S ribosomal subunit; part of the 5S rRNA/L5/L18/L25 subcomplex. Contacts the 5S and 23S rRNAs.

Functionally, this is one of the proteins that bind and probably mediate the attachment of the 5S RNA into the large ribosomal subunit, where it forms part of the central protuberance. The polypeptide is Large ribosomal subunit protein uL18 (Nitratiruptor sp. (strain SB155-2)).